The sequence spans 92 residues: Large ribosomal subunit protein eL37 (92 aa).

Zn(2+)-binding residues include Cys-19, Cys-22, Cys-34, and Cys-37. The C4-type zinc-finger motif lies at 19–37 (CRRCGRSSYHIQKSKCAQC).

The protein belongs to the eukaryotic ribosomal protein eL37 family. Requires Zn(2+) as cofactor.

Functionally, binds to the 23S rRNA. The sequence is that of Large ribosomal subunit protein eL37 (RpL37) from Spodoptera frugiperda (Fall armyworm).